The sequence spans 226 residues: Small ribosomal subunit protein uS5 (226 aa).

The span at 1–18 (MAAPQRSRTTGAPSSGGP) shows a compositional bias: polar residues. Positions 1 to 45 (MAAPQRSRTTGAPSSGGPSENERGRGGDRRGGDRRGGDRRGGDDR) are disordered. A compositionally biased stretch (basic and acidic residues) spans 20–45 (ENERGRGGDRRGGDRRGGDRRGGDDR). The 64-residue stretch at 48-111 (FVERVVTINR…EEAKKNFFRV (64 aa)) folds into the S5 DRBM domain.

Belongs to the universal ribosomal protein uS5 family. Part of the 30S ribosomal subunit. Contacts proteins S4 and S8.

Its function is as follows. With S4 and S12 plays an important role in translational accuracy. Located at the back of the 30S subunit body where it stabilizes the conformation of the head with respect to the body. This Beutenbergia cavernae (strain ATCC BAA-8 / DSM 12333 / CCUG 43141 / JCM 11478 / NBRC 16432 / NCIMB 13614 / HKI 0122) protein is Small ribosomal subunit protein uS5.